The following is a 405-amino-acid chain: Tryptophan synthase beta chain (405 aa).

The residue at position 95 (Lys95) is an N6-(pyridoxal phosphate)lysine.

Belongs to the TrpB family. As to quaternary structure, tetramer of two alpha and two beta chains. The cofactor is pyridoxal 5'-phosphate.

It catalyses the reaction (1S,2R)-1-C-(indol-3-yl)glycerol 3-phosphate + L-serine = D-glyceraldehyde 3-phosphate + L-tryptophan + H2O. Its pathway is amino-acid biosynthesis; L-tryptophan biosynthesis; L-tryptophan from chorismate: step 5/5. In terms of biological role, the beta subunit is responsible for the synthesis of L-tryptophan from indole and L-serine. This chain is Tryptophan synthase beta chain, found in Pseudomonas entomophila (strain L48).